A 428-amino-acid polypeptide reads, in one-letter code: YTH domain-containing protein ECT1 (428 aa).

One can recognise a YTH domain in the interval 245-382 (AKFFVIKSYS…EHGTKIIKIF (138 aa)). RNA is bound by residues 251-253 (KSY), Asp-257, 267-268 (WS), Asn-300, Trp-324, Trp-329, and Trp-337.

Interacts (via C-terminus) with CIPK1. Expressed in root apex, shoot apex, lateral root primordia, stamens, carpels and trichomes.

Its subcellular location is the nucleus. It is found in the cytoplasm. Specifically recognizes and binds N6-methyladenosine (m6A)-containing RNAs, and regulates mRNA stability. M6A is a modification present at internal sites of mRNAs and some non-coding RNAs and plays a role in mRNA stability and processing. The protein is YTH domain-containing protein ECT1 of Arabidopsis thaliana (Mouse-ear cress).